Consider the following 248-residue polypeptide: MSVTMREMLEAGCHFGHQTRFWNPKMAPFIFGHRNKIHIINLEKTLPMFQDAMKYVRQLAANRGTILFVGTKRQSREILAEEAGRAGMPYVDARWLGGMLTNFKTVKTSIKRLKDMEAAKEAGALETMSKKEALMFEREMLKLEKSIGGIKDMGGVPDAIFVVDVGYHKIAVTEANKLGVPVIGVVDTNHSPEGIDYVIPGNDDSSKAVALYVRGVADAILEGRANAVQEVVEAARGGDDEFVEVQEG.

Belongs to the universal ribosomal protein uS2 family.

In Cupriavidus necator (strain ATCC 17699 / DSM 428 / KCTC 22496 / NCIMB 10442 / H16 / Stanier 337) (Ralstonia eutropha), this protein is Small ribosomal subunit protein uS2.